Here is a 296-residue protein sequence, read N- to C-terminus: Release factor glutamine methyltransferase (296 aa).

Residues glycine 133–glycine 137, aspartate 156, and asparagine 201 each bind S-adenosyl-L-methionine. Asparagine 201–tyrosine 204 provides a ligand contact to substrate.

Belongs to the protein N5-glutamine methyltransferase family. PrmC subfamily.

The enzyme catalyses L-glutaminyl-[peptide chain release factor] + S-adenosyl-L-methionine = N(5)-methyl-L-glutaminyl-[peptide chain release factor] + S-adenosyl-L-homocysteine + H(+). Its function is as follows. Methylates the class 1 translation termination release factors RF1/PrfA and RF2/PrfB on the glutamine residue of the universally conserved GGQ motif. The protein is Release factor glutamine methyltransferase of Rhodopirellula baltica (strain DSM 10527 / NCIMB 13988 / SH1).